Here is a 177-residue protein sequence, read N- to C-terminus: Ribosome rescue factor SmrB (177 aa).

The Smr domain maps to 98 to 173 (LDMHGMKQDE…GAGAILVLLS (76 aa)).

This sequence belongs to the SmrB family. In terms of assembly, associates with collided ribosomes, but not with correctly translating polysomes.

Its function is as follows. Acts as a ribosome collision sensor. Detects stalled/collided disomes (pairs of ribosomes where the leading ribosome is stalled and a second ribosome has collided with it) and endonucleolytically cleaves mRNA at the 5' boundary of the stalled ribosome. Stalled/collided disomes form a new interface (primarily via the 30S subunits) that binds SmrB. Cleaved mRNA becomes available for tmRNA ligation, leading to ribosomal subunit dissociation and rescue of stalled ribosomes. This is Ribosome rescue factor SmrB from Aliivibrio fischeri (strain ATCC 700601 / ES114) (Vibrio fischeri).